Reading from the N-terminus, the 72-residue chain is Large ribosomal subunit protein uL29 (72 aa).

It belongs to the universal ribosomal protein uL29 family.

The protein is Large ribosomal subunit protein uL29 of Prochlorococcus marinus (strain MIT 9312).